Consider the following 252-residue polypeptide: tRNA (guanine-N(1)-)-methyltransferase (252 aa).

S-adenosyl-L-methionine-binding positions include Gly117 and 137-142 (IGDYVL).

This sequence belongs to the RNA methyltransferase TrmD family. Homodimer.

The protein resides in the cytoplasm. It carries out the reaction guanosine(37) in tRNA + S-adenosyl-L-methionine = N(1)-methylguanosine(37) in tRNA + S-adenosyl-L-homocysteine + H(+). Functionally, specifically methylates guanosine-37 in various tRNAs. This Idiomarina loihiensis (strain ATCC BAA-735 / DSM 15497 / L2-TR) protein is tRNA (guanine-N(1)-)-methyltransferase.